A 60-amino-acid polypeptide reads, in one-letter code: Sperm protamine P1 (60 aa).

The tract at residues 1 to 60 (MARYRHSRSRSRSRYRRRRRRRSRYRSQRRRYRGRRRRRSRRGRRRGYSRRRYSRRRRRY) is disordered.

This sequence belongs to the protamine P1 family. As to expression, testis.

Its subcellular location is the nucleus. The protein localises to the chromosome. Its function is as follows. Protamines substitute for histones in the chromatin of sperm during the haploid phase of spermatogenesis. They compact sperm DNA into a highly condensed, stable and inactive complex. In Osphranter rufus (Red kangaroo), this protein is Sperm protamine P1 (PRM1).